A 262-amino-acid chain; its full sequence is Cutinase 2 (262 aa).

Tyr61 contacts poly(ethylene terephthalate). Ser131 (nucleophile) is an active-site residue. Met132 and Trp156 together coordinate poly(ethylene terephthalate). Residues Asp177 and His209 each act as charge relay system in the active site. An intrachain disulfide couples Cys242 to Cys260.

It belongs to the AB hydrolase superfamily.

The protein resides in the secreted. It localises to the periplasm. It catalyses the reaction a butanoate ester + H2O = an aliphatic alcohol + butanoate + H(+). The enzyme catalyses an acetyl ester + H2O = an aliphatic alcohol + acetate + H(+). It carries out the reaction (ethylene terephthalate)(n) + H2O = (ethylene terephthalate)(n-1) + 4-[(2-hydroxyethoxy)carbonyl]benzoate + H(+). The catalysed reaction is cutin + H2O = cutin monomers.. Catalyzes the hydrolysis of cutin, a polyester that forms the structure of plant cuticle. Shows esterase activity towards p-nitrophenol-linked aliphatic esters (pNP-aliphatic esters). Capable of degrading the plastic poly(ethylene terephthalate) (PET), the most abundant polyester plastic in the world. Capable of degrading the bioplastic poly(lactic acid) (PLLA). In Thermobifida cellulosilytica, this protein is Cutinase 2.